The following is a 374-amino-acid chain: Pyruvate dehydrogenase E1 component subunit beta-1, mitochondrial (374 aa).

The N-terminal 34 residues, M1–Y34, are a transit peptide targeting the mitochondrion. Residue E97 participates in thiamine diphosphate binding. Residues I150, A198, I199, and D201 each contribute to the K(+) site.

Tetramer of 2 alpha and 2 beta subunits. Requires thiamine diphosphate as cofactor.

The protein localises to the mitochondrion matrix. It catalyses the reaction N(6)-[(R)-lipoyl]-L-lysyl-[protein] + pyruvate + H(+) = N(6)-[(R)-S(8)-acetyldihydrolipoyl]-L-lysyl-[protein] + CO2. The pyruvate dehydrogenase complex catalyzes the overall conversion of pyruvate to acetyl-CoA and CO(2). It contains multiple copies of three enzymatic components: pyruvate dehydrogenase (E1), dihydrolipoamide acetyltransferase (E2) and lipoamide dehydrogenase (E3). In Oryza sativa subsp. japonica (Rice), this protein is Pyruvate dehydrogenase E1 component subunit beta-1, mitochondrial.